A 399-amino-acid polypeptide reads, in one-letter code: Phosphoglycerate kinase (399 aa).

Residues 22-24 (DFN), Arg37, 60-63 (HFGR), Arg118, and Arg151 contribute to the substrate site. Residues Lys201, Glu322, and 352-355 (GGDS) contribute to the ATP site.

It belongs to the phosphoglycerate kinase family. Monomer.

It is found in the cytoplasm. It catalyses the reaction (2R)-3-phosphoglycerate + ATP = (2R)-3-phospho-glyceroyl phosphate + ADP. It functions in the pathway carbohydrate degradation; glycolysis; pyruvate from D-glyceraldehyde 3-phosphate: step 2/5. The sequence is that of Phosphoglycerate kinase from Wolbachia sp. subsp. Brugia malayi (strain TRS).